The sequence spans 130 residues: Riboflavin kinase (130 aa).

12–17 (GLGVGA) serves as a coordination point for CDP. 2 residues coordinate Mg(2+): Thr-39 and Asn-41. FMN-binding residues include Thr-90 and Glu-98. Residue 103–106 (KNLR) coordinates CDP.

The protein belongs to the archaeal riboflavin kinase family. The cofactor is Mg(2+).

The catalysed reaction is riboflavin + CTP = CDP + FMN + H(+). The protein operates within cofactor biosynthesis; FMN biosynthesis; FMN from riboflavin (CTP route): step 1/1. Catalyzes the CTP-dependent phosphorylation of riboflavin (vitamin B2) to form flavin mononucleotide (FMN). The chain is Riboflavin kinase from Staphylothermus marinus (strain ATCC 43588 / DSM 3639 / JCM 9404 / F1).